The sequence spans 64 residues: Large ribosomal subunit protein uL29 (64 aa).

This sequence belongs to the universal ribosomal protein uL29 family.

The protein is Large ribosomal subunit protein uL29 of Levilactobacillus brevis (strain ATCC 367 / BCRC 12310 / CIP 105137 / JCM 1170 / LMG 11437 / NCIMB 947 / NCTC 947) (Lactobacillus brevis).